Reading from the N-terminus, the 155-residue chain is Small ribosomal subunit protein uS7c (155 aa).

This sequence belongs to the universal ribosomal protein uS7 family. In terms of assembly, part of the 30S ribosomal subunit.

It is found in the plastid. The protein localises to the chloroplast. One of the primary rRNA binding proteins, it binds directly to 16S rRNA where it nucleates assembly of the head domain of the 30S subunit. In Typha angustifolia (Narrow leaf cattail), this protein is Small ribosomal subunit protein uS7c (rps7).